The primary structure comprises 159 residues: Succinate dehydrogenase [ubiquinone] cytochrome b small subunit, mitochondrial (159 aa).

A mitochondrion-targeting transit peptide spans 1–36 (MATLWRLSVLCGARGGGALVLRTSVVRPAHVSAFLQ). The Mitochondrial matrix portion of the chain corresponds to 37–63 (DRHTPGWCGVQHIHLSPSHQASSKAAS). Residues 64 to 85 (LHWTGERVVSVLLLGLLPAAYL) traverse the membrane as a helical segment. Residues 86-90 (NPCSA) are Mitochondrial intermembrane-facing. The chain crosses the membrane as a helical span at residues 91-111 (MDYSLAAALTLHGHWGIGQVV). Heme b is bound at residue His102. The Mitochondrial matrix portion of the chain corresponds to 112–120 (TDYVRGDAL). Tyr114 contacts a ubiquinone. Residues 121 to 142 (QKVAKAGLLALSAFTFAGLCYF) traverse the membrane as a helical segment. Topologically, residues 143-159 (NYHDVGICKAVAMLWKL) are mitochondrial intermembrane.

It belongs to the CybS family. Component of complex II composed of four subunits: the flavoprotein (FP) SDHA, iron-sulfur protein (IP) SDHB, and a cytochrome b560 composed of SDHC and SDHD.

It localises to the mitochondrion inner membrane. Its pathway is carbohydrate metabolism; tricarboxylic acid cycle. Membrane-anchoring subunit of succinate dehydrogenase (SDH) that is involved in complex II of the mitochondrial electron transport chain and is responsible for transferring electrons from succinate to ubiquinone (coenzyme Q). SDH also oxidizes malate to the non-canonical enol form of oxaloacetate, enol-oxaloacetate. Enol-oxaloacetate, which is a potent inhibitor of the succinate dehydrogenase activity, is further isomerized into keto-oxaloacetate. This is Succinate dehydrogenase [ubiquinone] cytochrome b small subunit, mitochondrial (SDHD) from Sus scrofa (Pig).